The primary structure comprises 772 residues: Cellulosomal-scaffolding protein B (772 aa).

The 80-residue stretch at 1–80 (DPSKSFDSAI…TTFVAGGVNL (80 aa)) folds into the Cohesin 1 domain. The tract at residues 81–93 (GSSVPTTQPNVPS) is linker (Pro/Thr-rich). A Cohesin 2 domain is found at 94-240 (DGVVVEIGKV…VNVGNATPTK (147 aa)). Over residues 235–276 (NATPTKGATPTNTATPTKSATATPPGHSVPTNTPTNTPANTP) the composition is skewed to low complexity. Disordered stretches follow at residues 235–277 (NATP…NTPV) and 438–464 (VVPS…PSDD). The tract at residues 241–272 (GATPTNTATPTKSATATPPGHSVPTNTPTNTP) is linker (Pro/Thr-rich). A CBM3 domain is found at 277 to 435 (VSGNLKVEFY…GVLVWGKEPG (159 aa)). Positions 438-461 (VVPSTQPVTTPPATTKPPATTIPP) are enriched in low complexity. Residues 440–461 (PSTQPVTTPPATTKPPATTIPP) are linker (Pro/Thr-rich). The 146-residue stretch at 462 to 607 (SDDPNAIKIK…ETDLINGGVL (146 aa)) folds into the Cohesin 3 domain. A Dockerin domain is found at 704–771 (IMMWVGDIVK…FGATSSDYDA (68 aa)).

O-glycosylated on most but not all Thr residues of the linker units.

Its subcellular location is the secreted. Acts as a scaffolding protein in the cellulosome. It promotes binding of cellulose to the catalytic domains of the cellulolytic enzymes probably through the binding of the nine repeated domains with dockerin domains present in catalytic subunits of the cellulosome. This Acetivibrio thermocellus (Hungateiclostridium thermocellum) protein is Cellulosomal-scaffolding protein B (cipB).